The sequence spans 274 residues: CTO1 family protein C17G9.12c (274 aa).

It belongs to the CTO1 family.

The protein localises to the cytoplasm. It localises to the nucleus. This Schizosaccharomyces pombe (strain 972 / ATCC 24843) (Fission yeast) protein is CTO1 family protein C17G9.12c.